The primary structure comprises 541 residues: Atrial natriuretic peptide receptor 3 (541 aa).

The first 26 residues, 1 to 26 (MPSLLVLTFSPCVLLGWALLAGGTGG), serve as a signal peptide directing secretion. Residues 27-481 (GGVGGGGGGA…PCKSSGGLEE (455 aa)) are Extracellular-facing. Asn-86 carries an N-linked (GlcNAc...) (complex) asparagine glycan. Residues Ser-106, Val-135, and Cys-136 each contribute to the chloride site. 2 disulfide bridges follow: Cys-108/Cys-136 and Cys-213/Cys-261. Asn-293 is a glycosylation site (N-linked (GlcNAc...) (high mannose) asparagine). The N-linked (GlcNAc...) (complex) asparagine glycan is linked to Asn-394. Residues 482–504 (SAVTGIVVGALLGAGLLMAFYFF) form a helical membrane-spanning segment. Over 505 to 541 (RKKYRITIERRTQQEESNLGKHRELREDSIRSHFSVA) the chain is Cytoplasmic.

Belongs to the ANF receptor family. As to quaternary structure, homodimer; disulfide-linked. Dimers can also be formed through the C-terminal cysteine of isoform 2. Interacts with OSTN.

It localises to the cell membrane. Receptor for the natriuretic peptide hormones, binding with similar affinities atrial natriuretic peptide NPPA/ANP, brain natriuretic peptide NPPB/BNP, and C-type natriuretic peptide NPPC/CNP. May function as a clearance receptor for NPPA, NPPB and NPPC, regulating their local concentrations and effects. Acts as a regulator of osteoblast differentiation and bone growth by binding to its ligand osteocrin, thereby preventing binding between NPR3/NPR-C and natriuretic peptides, leading to increase cGMP production. This chain is Atrial natriuretic peptide receptor 3 (NPR3), found in Homo sapiens (Human).